We begin with the raw amino-acid sequence, 226 residues long: ATP synthase subunit a (226 aa).

Helical transmembrane passes span 20–40, 74–94, 100–120, 158–180, and 197–217; these read LNWLSTFLGLLLIPFSFWLLP, FISLFSLIMFNNFLGLFPYIF, LTLTLALAFPLWLSFMLYGWI, LAVRLTANMIAGHLLLTLLGNTG, and IALLVLESAVAIIQSYVFAVL.

The protein belongs to the ATPase A chain family. As to quaternary structure, F-type ATPases have 2 components, CF(1) - the catalytic core - and CF(0) - the membrane proton channel. CF(1) has five subunits: alpha(3), beta(3), gamma(1), delta(1), epsilon(1). CF(0) has three main subunits: a, b and c.

The protein resides in the mitochondrion inner membrane. Mitochondrial membrane ATP synthase (F(1)F(0) ATP synthase or Complex V) produces ATP from ADP in the presence of a proton gradient across the membrane which is generated by electron transport complexes of the respiratory chain. F-type ATPases consist of two structural domains, F(1) - containing the extramembraneous catalytic core and F(0) - containing the membrane proton channel, linked together by a central stalk and a peripheral stalk. During catalysis, ATP synthesis in the catalytic domain of F(1) is coupled via a rotary mechanism of the central stalk subunits to proton translocation. Key component of the proton channel; it may play a direct role in the translocation of protons across the membrane. The sequence is that of ATP synthase subunit a (ATP6) from Anopheles quadrimaculatus (Common malaria mosquito).